A 414-amino-acid polypeptide reads, in one-letter code: Isocitrate dehydrogenase [NADP] cytoplasmic (414 aa).

The residue at position 2 (serine 2) is an N-acetylserine. Tyrosine 42 carries the phosphotyrosine modification. Position 75-77 (75-77) interacts with NADP(+); sequence TIT. Threonine 77 contributes to the substrate binding site. N6-acetyllysine is present on lysine 81. Position 82 (arginine 82) interacts with NADP(+). Residues 94–100 and arginine 109 each bind substrate; that span reads SPNGTIR. Lysine 126 carries the N6-succinyllysine modification. Residues arginine 132 and lysine 212 each coordinate substrate. Residues lysine 224, lysine 233, and lysine 243 each carry the N6-acetyllysine modification. Residue aspartate 252 coordinates Mn(2+). Lysine 260 lines the NADP(+) pocket. Mn(2+) is bound by residues aspartate 275 and aspartate 279. 310 to 315 is an NADP(+) binding site; it reads GTVTRH. Lysine 321 carries the N6-acetyllysine modification. Asparagine 328 lines the NADP(+) pocket. Position 389 is a phosphoserine (serine 389). Position 400 is an N6-succinyllysine (lysine 400).

The protein belongs to the isocitrate and isopropylmalate dehydrogenases family. As to quaternary structure, homodimer. Mg(2+) serves as cofactor. Mn(2+) is required as a cofactor. In terms of processing, acetylation at Lys-374 dramatically reduces catalytic activity.

Its subcellular location is the cytoplasm. It localises to the cytosol. It is found in the peroxisome. It catalyses the reaction D-threo-isocitrate + NADP(+) = 2-oxoglutarate + CO2 + NADPH. Catalyzes the NADP(+)-dependent oxidative decarboxylation of isocitrate (D-threo-isocitrate) to 2-ketoglutarate (2-oxoglutarate), which is required by other enzymes such as the phytanoyl-CoA dioxygenase. Plays a critical role in the generation of NADPH, an important cofactor in many biosynthesis pathways. May act as a corneal epithelial crystallin and may be involved in maintaining corneal epithelial transparency. This is Isocitrate dehydrogenase [NADP] cytoplasmic (IDH1) from Homo sapiens (Human).